The primary structure comprises 154 residues: Ribosomal RNA large subunit methyltransferase H (154 aa).

Glycine 102 contributes to the S-adenosyl-L-methionine binding site.

This sequence belongs to the RNA methyltransferase RlmH family. In terms of assembly, homodimer.

Its subcellular location is the cytoplasm. The catalysed reaction is pseudouridine(1915) in 23S rRNA + S-adenosyl-L-methionine = N(3)-methylpseudouridine(1915) in 23S rRNA + S-adenosyl-L-homocysteine + H(+). Functionally, specifically methylates the pseudouridine at position 1915 (m3Psi1915) in 23S rRNA. The protein is Ribosomal RNA large subunit methyltransferase H of Caulobacter sp. (strain K31).